We begin with the raw amino-acid sequence, 119 residues long: Putative transmembrane protein ORF119 (119 aa).

3 helical membrane passes run 9-29 (TLAIALVFLGISLIFLVPAMV), 73-93 (QYAGIYTLYLSFISFVGSIFT), and 95-115 (PIALIMLILVSLIITLFAFYY).

Its subcellular location is the host membrane. The polypeptide is Putative transmembrane protein ORF119 (Acidianus convivator (ATV)).